Here is a 272-residue protein sequence, read N- to C-terminus: Putative phosphoenolpyruvate synthase regulatory protein (272 aa).

152 to 159 (GVSRCGKT) contacts ADP.

Belongs to the pyruvate, phosphate/water dikinase regulatory protein family. PSRP subfamily.

The catalysed reaction is [pyruvate, water dikinase] + ADP = [pyruvate, water dikinase]-phosphate + AMP + H(+). The enzyme catalyses [pyruvate, water dikinase]-phosphate + phosphate + H(+) = [pyruvate, water dikinase] + diphosphate. Functionally, bifunctional serine/threonine kinase and phosphorylase involved in the regulation of the phosphoenolpyruvate synthase (PEPS) by catalyzing its phosphorylation/dephosphorylation. The protein is Putative phosphoenolpyruvate synthase regulatory protein of Pseudomonas fluorescens (strain ATCC BAA-477 / NRRL B-23932 / Pf-5).